The following is a 491-amino-acid chain: Cell division control protein 1 (491 aa).

A disordered region spans residues 1–33 (MVYRNRSKSVLSTHSKKSDDKAHYKSRSKKKSK). The Cytoplasmic portion of the chain corresponds to 1–39 (MVYRNRSKSVLSTHSKKSDDKAHYKSRSKKKSKSRSKKR). Over residues 24 to 33 (YKSRSKKKSK) the composition is skewed to basic residues. Residues 40–60 (LRIYWRYISIVWILWLGLISY) traverse the membrane as a helical segment. The Extracellular segment spans residues 61 to 391 (YESVVVKRAM…LCYMPDPYKA (331 aa)). A divalent metal cation contacts are provided by D95, D144, N183, and H323. The chain crosses the membrane as a helical span at residues 392–412 (IRMYLWGLLFSAAFIAYMHFF). The Cytoplasmic segment spans residues 413–465 (PKSFNNRVATIMNRVFTRPDGNTSDLPLPTSISKSKSKKSLTHSKYAVNDTRS). A helical membrane pass occupies residues 466 to 486 (IKQFLVNAIVLFVSVMPIFIY). Residues 487 to 491 (FYTVV) lie on the Extracellular side of the membrane.

The protein belongs to the metallophosphoesterase superfamily. MPPE1 family. A divalent metal cation is required as a cofactor.

It is found in the membrane. Its function is as follows. Probable metallophosphoesterase which may participate in recombinational repair of double -strand breaks. The protein is Cell division control protein 1 (CDC1) of Saccharomyces cerevisiae (strain ATCC 204508 / S288c) (Baker's yeast).